Consider the following 395-residue polypeptide: Elongation factor Tu (395 aa).

The tr-type G domain occupies 10-204; the sequence is KEHANIGTIG…AVDDFIPTPE (195 aa). The G1 stretch occupies residues 19-26; sequence GHVDHGKT. 19-26 provides a ligand contact to GTP; that stretch reads GHVDHGKT. T26 is a binding site for Mg(2+). The interval 60-64 is G2; the sequence is GITIN. A G3 region spans residues 81–84; it reads DCPG. GTP-binding positions include 81–85 and 136–139; these read DCPGH and NKVD. Residues 136-139 are G4; it reads NKVD. Positions 174 to 176 are G5; the sequence is SAL.

Belongs to the TRAFAC class translation factor GTPase superfamily. Classic translation factor GTPase family. EF-Tu/EF-1A subfamily. As to quaternary structure, monomer.

The protein localises to the cytoplasm. The enzyme catalyses GTP + H2O = GDP + phosphate + H(+). Its function is as follows. GTP hydrolase that promotes the GTP-dependent binding of aminoacyl-tRNA to the A-site of ribosomes during protein biosynthesis. The protein is Elongation factor Tu of Staphylococcus saprophyticus subsp. saprophyticus (strain ATCC 15305 / DSM 20229 / NCIMB 8711 / NCTC 7292 / S-41).